Consider the following 199-residue polypeptide: Recombination protein RecR (199 aa).

The C4-type zinc-finger motif lies at 58–73; sequence CSICCNITDTDPCSMC. Positions 81–176 constitute a Toprim domain; the sequence is SVICVVEDPR…KVTRIAHGLP (96 aa).

Belongs to the RecR family.

Functionally, may play a role in DNA repair. It seems to be involved in an RecBC-independent recombinational process of DNA repair. It may act with RecF and RecO. This is Recombination protein RecR from Clostridioides difficile (strain 630) (Peptoclostridium difficile).